A 365-amino-acid polypeptide reads, in one-letter code: Donuts protein 1 (365 aa).

The tract at residues 28–49 (NSGLELPSQDYTNVEEKESSPK) is disordered. Residues 82 to 125 (EKLCVLKELKIAFPEVDDTLIKAILIASQGVLEPAFNSLLYYSS) enclose the CUE domain. Disordered stretches follow at residues 215–246 (HNTI…KGVN) and 286–335 (ESEE…YKSA). Positions 224–244 (SILKGKEKGKEEEKEKGEEKG) are enriched in basic and acidic residues. The span at 286–295 (ESEEEEEQDV) shows a compositional bias: acidic residues. Residues 315–331 (EAQRDSADRLPAKDDGG) are compositionally biased toward basic and acidic residues.

As to quaternary structure, may interact directly with ADY3. Probable component of a spindle pole body (SPB) complex composed of ADY3, SSP1, DON1, MPC54, SPO21/MPC70, NUD1 and CNM67.

Its subcellular location is the prospore membrane. Functionally, involved in the pathway that organizes the prospore membrane (PSM) during sporulation. This Saccharomyces cerevisiae (strain ATCC 204508 / S288c) (Baker's yeast) protein is Donuts protein 1 (DON1).